Reading from the N-terminus, the 387-residue chain is MEQVVIVDAIRTPMGRSKGGAFRNVRAEDLSAHLMRSLLARNPALEAAALDDIYWGCVQQTLEQGFNIARNAALLAEVPHSVPAVTVNRLCGSSMQALHDAARMIMTGDAQACLVGGVEHMGHVPMSHGVDFHPGLSRNVAKAAGMMGLTAEMLARMHGISREMQDAFAARSHARAWAATQSGAFKNEIIPTGGHDADGVLKQFNYDEVIRPETTMEALATLRPAFDPVSGTVTAGSSSALSDGAAAMLVMSESRARELGLKPRARVRSMAVVGCDPSIMGYGPVPASKLALKKAGLSASDIGVFEMNEAFAAQILPCIKDLGLMEQIDEKINLNGGAIALGHPLGCSGARISTTLLNLMERKDVQFGLATMCIGLGQGIATVFERV.

The Acyl-thioester intermediate role is filled by C91. Active-site proton acceptor residues include H343 and C373.

It belongs to the thiolase-like superfamily. Thiolase family. Heterotetramer of two alpha chains (FadB) and two beta chains (FadA).

The protein localises to the cytoplasm. The catalysed reaction is an acyl-CoA + acetyl-CoA = a 3-oxoacyl-CoA + CoA. Its pathway is lipid metabolism; fatty acid beta-oxidation. Its function is as follows. Catalyzes the final step of fatty acid oxidation in which acetyl-CoA is released and the CoA ester of a fatty acid two carbons shorter is formed. The chain is 3-ketoacyl-CoA thiolase from Escherichia fergusonii (strain ATCC 35469 / DSM 13698 / CCUG 18766 / IAM 14443 / JCM 21226 / LMG 7866 / NBRC 102419 / NCTC 12128 / CDC 0568-73).